Reading from the N-terminus, the 379-residue chain is Quinolinate synthase (379 aa).

Iminosuccinate contacts are provided by His-60 and Ser-81. Cys-126 is a binding site for [4Fe-4S] cluster. Iminosuccinate contacts are provided by residues 152-154 (YAN) and Ser-169. Residue Cys-213 coordinates [4Fe-4S] cluster. Iminosuccinate is bound by residues 239–241 (HPE) and Thr-256. A [4Fe-4S] cluster-binding site is contributed by Cys-310.

Belongs to the quinolinate synthase family. Type 1 subfamily. [4Fe-4S] cluster serves as cofactor.

It localises to the cytoplasm. It catalyses the reaction iminosuccinate + dihydroxyacetone phosphate = quinolinate + phosphate + 2 H2O + H(+). It functions in the pathway cofactor biosynthesis; NAD(+) biosynthesis; quinolinate from iminoaspartate: step 1/1. Catalyzes the condensation of iminoaspartate with dihydroxyacetone phosphate to form quinolinate. In Herminiimonas arsenicoxydans, this protein is Quinolinate synthase.